The sequence spans 306 residues: Glutaminase (306 aa).

Substrate is bound by residues S64, N115, E159, N166, Y190, Y242, and V260.

Belongs to the glutaminase family. Homotetramer.

It carries out the reaction L-glutamine + H2O = L-glutamate + NH4(+). This is Glutaminase from Vibrio cholerae serotype O1 (strain ATCC 39541 / Classical Ogawa 395 / O395).